Reading from the N-terminus, the 450-residue chain is UDP-N-acetylmuramoylalanine--D-glutamate ligase (450 aa).

119–125 (GSNGKTT) provides a ligand contact to ATP.

It belongs to the MurCDEF family.

It is found in the cytoplasm. The catalysed reaction is UDP-N-acetyl-alpha-D-muramoyl-L-alanine + D-glutamate + ATP = UDP-N-acetyl-alpha-D-muramoyl-L-alanyl-D-glutamate + ADP + phosphate + H(+). It functions in the pathway cell wall biogenesis; peptidoglycan biosynthesis. In terms of biological role, cell wall formation. Catalyzes the addition of glutamate to the nucleotide precursor UDP-N-acetylmuramoyl-L-alanine (UMA). The chain is UDP-N-acetylmuramoylalanine--D-glutamate ligase from Bacillus cereus (strain ATCC 10987 / NRS 248).